The chain runs to 136 residues: uncharacterized protein (136 aa).

Disordered stretches follow at residues 58 to 82 (TSDD…TTQT) and 112 to 136 (NNPK…VVTQ).

This is an uncharacterized protein from Dictyostelium discoideum (Social amoeba).